Consider the following 257-residue polypeptide: Melatonin receptor type 1A (257 aa).

Over 5 to 22 (LASIVNDGWSLSSLHCQL) the chain is Extracellular. A disulfide bridge links Cys-20 with Cys-97. The chain crosses the membrane as a helical span at residues 23–43 (SGFLMGLSVIGSVFNITGIAI). Topologically, residues 44–64 (NRYCCICHSLRYNKLYSSTNS) are cytoplasmic. A helical membrane pass occupies residues 65–85 (LCYVFLIWMLTLVAIVPNLCV). Over 86 to 107 (GTLQYDPRIYSCTFTQSVSSAY) the chain is Extracellular. Residues 108–128 (TIAVVVFHFIVPMLVVIFCYL) traverse the membrane as a helical segment. The Cytoplasmic portion of the chain corresponds to 129–160 (RIWALVLQVRWRVKPDNKPKLKPQDFRNFVTM). Residues 161–181 (FVVFVLFAICWAPLNFIGLVV) form a helical membrane-spanning segment. Residues 182–194 (ASEPASMAPRIPE) lie on the Extracellular side of the membrane. A helical membrane pass occupies residues 195 to 215 (WLFVASYYMGYFNSCLNAIIY). Over 216-257 (GLLNQNFRQEYRKIIVSLCTTKMFFVDSSNHVAHRIKRKPSP) the chain is Cytoplasmic.

It belongs to the G-protein coupled receptor 1 family.

Its subcellular location is the cell membrane. Its function is as follows. High affinity receptor for melatonin. Likely to mediate the reproductive and circadian actions of melatonin. The activity of this receptor is mediated by pertussis toxin sensitive G proteins that inhibit adenylate cyclase activity. Possibly involved in sleep induction, by melatonin activation of the potassium channel KCNMA1/BK and the dissociation of G-beta and G-gamma subunits, thereby decreasing synaptic transmission. In Bos taurus (Bovine), this protein is Melatonin receptor type 1A (MTNR1A).